The following is a 543-amino-acid chain: Carboxypeptidase Y homolog A (543 aa).

Residues 1 to 17 (MKLLTTGLLASAALVAA) form the signal peptide. A propeptide spanning residues 18–124 (QEQQVLRADE…KLKNYDLRVK (107 aa)) is cleaved from the precursor. Cystine bridges form between cysteine 179-cysteine 419, cysteine 313-cysteine 327, cysteine 337-cysteine 360, cysteine 344-cysteine 353, and cysteine 382-cysteine 389. N-linked (GlcNAc...) asparagine glycosylation occurs at asparagine 210. The active site involves serine 266. The active site involves aspartate 458. An N-linked (GlcNAc...) asparagine glycan is attached at asparagine 509. Residue histidine 520 is part of the active site.

The protein belongs to the peptidase S10 family.

The protein localises to the vacuole. The enzyme catalyses Release of a C-terminal amino acid with broad specificity.. In terms of biological role, vacuolar carboxypeptidase involved in degradation of small peptides. Digests preferentially peptides containing an aliphatic or hydrophobic residue in P1' position, as well as methionine, leucine or phenylalanine in P1 position of ester substrate. The polypeptide is Carboxypeptidase Y homolog A (CPYA) (Arthroderma gypseum (strain ATCC MYA-4604 / CBS 118893) (Microsporum gypseum)).